A 782-amino-acid chain; its full sequence is Structure-specific endonuclease subunit SLX4 (782 aa).

Disordered stretches follow at residues 63–91 and 359–425; these read TPKP…MSAM and KEHE…KKSK. Over residues 73–84 the composition is skewed to basic residues; that stretch reads GLRKTGSRKSKK. Over residues 374–388 the composition is skewed to polar residues; that stretch reads PAQSLTQSQVPSSID.

This sequence belongs to the SLX4 family. In terms of assembly, forms a heterodimer with SLX1. Post-translationally, phosphorylated in response to DNA damage.

It is found in the nucleus. In terms of biological role, regulatory subunit of the SLX1-SLX4 structure-specific endonuclease that resolves DNA secondary structures generated during DNA repair and recombination. Has endonuclease activity towards branched DNA substrates, introducing single-strand cuts in duplex DNA close to junctions with ss-DNA. This chain is Structure-specific endonuclease subunit SLX4, found in Scheffersomyces stipitis (strain ATCC 58785 / CBS 6054 / NBRC 10063 / NRRL Y-11545) (Yeast).